The sequence spans 1096 residues: Cohesin subunit scc-3 (1096 aa).

Polar residues predominate over residues 1–21; sequence MSETPTDQSPQRMSTRNQARV. Disordered stretches follow at residues 1–53 and 67–106; these read MSET…KKRA and NLNN…ESAE. Residues 261-312 are a coiled coil; the sequence is IELTQSKEKTSKQIEAEKAKLKNNSAGNEKYEALVAQRTQTEERAEEIRQII. The SCD domain occupies 320 to 405; that stretch reads FVHRYRDVVP…NKFKDRLVSM (86 aa). The segment at 1057–1096 is disordered; sequence DNMSVRSGMTVTSNATMRSTASSTRGRGRGRGRSRIADDF. The segment covering 1060–1073 has biased composition (polar residues); that stretch reads SVRSGMTVTSNATM.

The protein belongs to the SCC3 family. Component of the cohesin complex, composed of the smc-1 and smc-3 heterodimer attached via their hinge domain, scc-1 which links them, and scc-3. Interacts with scc-1, smc-1 and tim-1. In terms of tissue distribution, expressed in gonadal cells.

It is found in the nucleus. The protein localises to the chromosome. Component of the cohesin complex, a complex required for the cohesion of sister chromatids after DNA replication. The cohesin complex apparently forms a large proteinaceous ring within which sister chromatids can be trapped. At anaphase, the scc-1 subunit of the complex is cleaved and dissociates from chromatin, allowing sister chromatids to segregate. The cohesin complex may also play a role in spindle pole assembly during mitosis. Plays an essential role in cell division during embryonic development. Required for the assembly of the synaptonemal complex between homologous chromosomes to promote sister chromatid cohesion during mitosis and meiosis. Has a role in stabilization of homologous chromosome associations during meiotic synapsis. Required for chromosome segregation during mitosis and meiosis. Plays a role in DNA double-strand break (DSB) repair during meiotic recombination and promotes the assembly of the 9-1-1 cell-cycle checkpoint response complex which is required for inducing apoptosis in response to DNA damage, at DNA damage sites. This is Cohesin subunit scc-3 from Caenorhabditis elegans.